We begin with the raw amino-acid sequence, 239 residues long: Serine protease SplC (239 aa).

Positions 1–36 (MNKNIVIKSMAALAILTSVTGINAAVVEETQQIANA) are cleaved as a signal peptide. Active-site charge relay system residues include His-75, Asp-113, and Ser-193.

Belongs to the peptidase S1B family.

Its subcellular location is the secreted. This chain is Serine protease SplC (splC), found in Staphylococcus aureus.